The following is a 431-amino-acid chain: Urokinase-type plasminogen activator (431 aa).

Positions 1–20 are cleaved as a signal peptide; that stretch reads MRALLARLLLCVLVVSDSKG. In terms of domain architecture, EGF-like spans 27-63; sequence VPSNCDCLNGGTCVSNKYFSNIHWCNCPKKFGGQHCE. 6 disulfide bridges follow: Cys31/Cys39, Cys33/Cys51, Cys53/Cys62, Cys70/Cys151, Cys91/Cys133, and Cys122/Cys146. A binds urokinase plasminogen activator surface receptor region spans residues 34–57; that stretch reads LNGGTCVSNKYFSNIHWCNCPKKF. The region spanning 69–151 is the Kringle domain; the sequence is TCYEGNGHFY…LVQECMVHDC (83 aa). Residues 152 to 178 are connecting peptide; sequence ADGKKPSSPPEELKFQCGQKTLRPRFK. A Phosphoserine modification is found at Ser158. 6 cysteine pairs are disulfide-bonded: Cys168-Cys299, Cys209-Cys225, Cys217-Cys288, Cys313-Cys382, Cys345-Cys361, and Cys372-Cys400. The Peptidase S1 domain occupies 179–424; that stretch reads IVGGEFTTIE…FLPWIRSHTK (246 aa). Catalysis depends on charge relay system residues His224 and Asp275. N-linked (GlcNAc...) asparagine glycosylation occurs at Asn322. The residue at position 323 (Ser323) is a Phosphoserine. Residue Ser376 is the Charge relay system of the active site.

This sequence belongs to the peptidase S1 family. Found in high and low molecular mass forms. Each consists of two chains, A and B. The high molecular mass form contains a long chain A which is cleaved to yield a short chain A. Forms heterodimer with SERPINA5. Binds LRP1B; binding is followed by internalization and degradation. Interacts with MRC2. Interacts with PLAUR. In complex with SERPINE1, interacts with PLAUR/uPAR. Interacts with SORL1 and LRP1, either alone or in complex with SERPINE1; these interactions are abolished in the presence of LRPAP1/RAP. The ternary complex composed of PLAUR-PLAU-PAI1 also interacts with SORLA. Phosphorylation of Ser-158 and Ser-323 abolishes proadhesive ability but does not interfere with receptor binding. In terms of processing, produced as an inactive single-chain protein (pro-uPA or sc-uPA), is processed into the active disulfide-linked two-chain form of PLAU/uPA by a proteolytic event mediated, at least, by TMPRSS4.

It localises to the secreted. It catalyses the reaction Specific cleavage of Arg-|-Val bond in plasminogen to form plasmin.. Inhibited by SERPINA5. Inhibited by SERPINE1. In terms of biological role, specifically cleaves the zymogen plasminogen to form the active enzyme plasmin. In Pongo abelii (Sumatran orangutan), this protein is Urokinase-type plasminogen activator (PLAU).